Here is a 68-residue protein sequence, read N- to C-terminus: ATP synthase F(0) complex subunit 8 (68 aa).

A helical membrane pass occupies residues 8 to 24 (TWFTTILSMFLTLFIIF). Lys54 carries the post-translational modification N6-acetyllysine; alternate. Lys54 is subject to N6-succinyllysine; alternate. Lys57 carries the N6-acetyllysine modification.

This sequence belongs to the ATPase protein 8 family. As to quaternary structure, component of the ATP synthase complex composed at least of ATP5F1A/subunit alpha, ATP5F1B/subunit beta, ATP5MC1/subunit c (homooctomer), MT-ATP6/subunit a, MT-ATP8/subunit 8, ATP5ME/subunit e, ATP5MF/subunit f, ATP5MG/subunit g, ATP5MK/subunit k, ATP5MJ/subunit j, ATP5F1C/subunit gamma, ATP5F1D/subunit delta, ATP5F1E/subunit epsilon, ATP5PF/subunit F6, ATP5PB/subunit b, ATP5PD/subunit d, ATP5PO/subunit OSCP. ATP synthase complex consists of a soluble F(1) head domain (subunits alpha(3) and beta(3)) - the catalytic core - and a membrane F(0) domain - the membrane proton channel (subunits c, a, 8, e, f, g, k and j). These two domains are linked by a central stalk (subunits gamma, delta, and epsilon) rotating inside the F1 region and a stationary peripheral stalk (subunits F6, b, d, and OSCP). Interacts with PRICKLE3.

Its subcellular location is the mitochondrion membrane. Subunit 8, of the mitochondrial membrane ATP synthase complex (F(1)F(0) ATP synthase or Complex V) that produces ATP from ADP in the presence of a proton gradient across the membrane which is generated by electron transport complexes of the respiratory chain. ATP synthase complex consist of a soluble F(1) head domain - the catalytic core - and a membrane F(1) domain - the membrane proton channel. These two domains are linked by a central stalk rotating inside the F(1) region and a stationary peripheral stalk. During catalysis, ATP synthesis in the catalytic domain of F(1) is coupled via a rotary mechanism of the central stalk subunits to proton translocation. In vivo, can only synthesize ATP although its ATP hydrolase activity can be activated artificially in vitro. Part of the complex F(0) domain. The chain is ATP synthase F(0) complex subunit 8 from Hippopotamus amphibius (Hippopotamus).